Here is a 118-residue protein sequence, read N- to C-terminus: Large ribosomal subunit protein bL20 (118 aa).

This sequence belongs to the bacterial ribosomal protein bL20 family.

In terms of biological role, binds directly to 23S ribosomal RNA and is necessary for the in vitro assembly process of the 50S ribosomal subunit. It is not involved in the protein synthesizing functions of that subunit. In Bacillus anthracis (strain CDC 684 / NRRL 3495), this protein is Large ribosomal subunit protein bL20.